We begin with the raw amino-acid sequence, 390 residues long: Protein phosphatase 1B (390 aa).

Over residues 1-14 (MGAFLDKPKTEKHN) the composition is skewed to basic and acidic residues. The segment at 1 to 20 (MGAFLDKPKTEKHNAHGAGN) is disordered. Glycine 2 carries the N-myristoyl glycine lipid modification. A Glycyl lysine isopeptide (Lys-Gly) (interchain with G-Cter in ISG15) cross-link involves residue lysine 12. The PPM-type phosphatase domain maps to 23-295 (RYGLSSMQGW…DNMSVVLVCF (273 aa)). Residues aspartate 60, glycine 61, aspartate 243, and aspartate 286 each contribute to the Mn(2+) site. A disordered region spans residues 371–390 (NPHKDNDGGAGDLEDSLVAL). The residue at position 386 (serine 386) is a Phosphoserine.

The protein belongs to the PP2C family. As to quaternary structure, monomer. Interacts with PAK6. Interacts with the phosphorylated form of IKBKB/IKKB. It depends on Mg(2+) as a cofactor. The cofactor is Mn(2+). Post-translationally, isgylation negatively regulates its activity. N-myristoylation is essential for the recognition of its substrates for dephosphorylation. In terms of tissue distribution, isoform 1: Expressed ubiquitously. Isoform 2: Expressed exclusively in testis and intestine. Isoform 3: Expressed exclusively in brain and intestine. Isoform 4: Expressed exclusively in testis and intestine.

Its subcellular location is the cytoplasm. It localises to the cytosol. It is found in the membrane. It catalyses the reaction O-phospho-L-seryl-[protein] + H2O = L-seryl-[protein] + phosphate. It carries out the reaction O-phospho-L-threonyl-[protein] + H2O = L-threonyl-[protein] + phosphate. In terms of biological role, enzyme with a broad specificity. Dephosphorylates PRKAA1 and PRKAA2. Inhibits TBK1-mediated antiviral signaling by dephosphorylating it at 'Ser-172'. Plays an important role in the termination of TNF-alpha-mediated NF-kappa-B activation through dephosphorylating and inactivating IKBKB/IKKB. The protein is Protein phosphatase 1B (Ppm1b) of Mus musculus (Mouse).